The sequence spans 236 residues: Large ribosomal subunit protein uL1 (236 aa).

The protein belongs to the universal ribosomal protein uL1 family. In terms of assembly, part of the 50S ribosomal subunit.

In terms of biological role, binds directly to 23S rRNA. The L1 stalk is quite mobile in the ribosome, and is involved in E site tRNA release. Its function is as follows. Protein L1 is also a translational repressor protein, it controls the translation of the L11 operon by binding to its mRNA. The chain is Large ribosomal subunit protein uL1 from Corynebacterium jeikeium (strain K411).